We begin with the raw amino-acid sequence, 305 residues long: Taste receptor type 2 member 13 (305 aa).

Residues 1–7 (MGSSLYD) are Extracellular-facing. The helical transmembrane segment at 8–28 (ILTIVMIAEFIFGNVTNGFIV) threads the bilayer. Topologically, residues 29-42 (LTNCIAWLSKRTLS) are cytoplasmic. A helical transmembrane segment spans residues 43–63 (FIGWIQLFLAISRVVLIWEML). Residues 64–88 (LAWLKYMKYSFSYLAGTELRVMMLT) are Extracellular-facing. The chain crosses the membrane as a helical span at residues 89–109 (WVVSNHFSLWLATILSIFYLL). Topologically, residues 110 to 128 (KIASFSRPVFLYLKWRVKK) are cytoplasmic. Residues 129-149 (VLLLILLGNLIFLMFNILQIN) traverse the membrane as a helical segment. Residues 150-182 (THIEDWMDQYKRNITWDSRVNEFVGFSNLVLLE) are Extracellular-facing. Asparagine 162 is a glycosylation site (N-linked (GlcNAc...) asparagine). A helical transmembrane segment spans residues 183 to 203 (MIMFSVTPFTVALVSFILLIF). The Cytoplasmic portion of the chain corresponds to 204 to 232 (SLWKHLQKMHLSSRGERDPSTKAHVNALR). The helical transmembrane segment at 233–253 (IMVSFLLLYATYFISFFISLI) threads the bilayer. Topologically, residues 254 to 262 (PMAHKKGLD) are extracellular. The helical transmembrane segment at 263–283 (LMFSLTVGLFYPSSHSFILIL) threads the bilayer. Residues 284–305 (GHSNLRHSSCLVITYLRCKEKD) are Cytoplasmic-facing.

The protein belongs to the G-protein coupled receptor T2R family. Expressed in subsets of taste receptor cells of the tongue and palate epithelium and exclusively in gustducin-positive cells. Expressed in 15% taste bud cells in circumvallate and foliate papillae but only in 2% in fungiform papillae. Expressed in the duodenum, antrum and fundus (part of the stomach).

It localises to the membrane. Functionally, receptor that may play a role in the perception of bitterness and is gustducin-linked. May play a role in sensing the chemical composition of the gastrointestinal content. The activity of this receptor may stimulate alpha gustducin, mediate PLC-beta-2 activation and lead to the gating of TRPM5. This Rattus norvegicus (Rat) protein is Taste receptor type 2 member 13 (Tas2r13).